The sequence spans 69 residues: Large ribosomal subunit protein uL30 (69 aa).

Belongs to the universal ribosomal protein uL30 family. Part of the 50S ribosomal subunit.

The protein is Large ribosomal subunit protein uL30 of Rhizobium etli (strain ATCC 51251 / DSM 11541 / JCM 21823 / NBRC 15573 / CFN 42).